Consider the following 450-residue polypeptide: Tryptophan dimethylallyltransferase 2 (450 aa).

L-tryptophan contacts are provided by residues isoleucine 80–leucine 81 and glutamate 89. 3 residues coordinate substrate: arginine 100, lysine 186, and tyrosine 188. Positions 190 and 251 each coordinate L-tryptophan. Positions 264, 266, 268, 350, 352, 416, and 420 each coordinate substrate.

The protein belongs to the tryptophan dimethylallyltransferase family. In terms of assembly, homodimer.

It carries out the reaction L-tryptophan + dimethylallyl diphosphate = 4-(3-methylbut-2-enyl)-L-tryptophan + diphosphate. The protein operates within alkaloid biosynthesis; ergot alkaloid biosynthesis. Catalyzes the first step of ergot alkaloid biosynthesis. Ergot alkaloids, which are produced by endophyte fungi, can enhance plant host fitness, but also cause livestock toxicosis to host plants. This is Tryptophan dimethylallyltransferase 2 (dmaW2) from Epichloe coenophiala (Tall fescue endophyte fungus).